The sequence spans 159 residues: Cyclic pyranopterin monophosphate synthase (159 aa).

Substrate is bound by residues 75–77 (LCH) and 113–114 (ME). The active site involves D128.

This sequence belongs to the MoaC family. In terms of assembly, homohexamer; trimer of dimers.

It catalyses the reaction (8S)-3',8-cyclo-7,8-dihydroguanosine 5'-triphosphate = cyclic pyranopterin phosphate + diphosphate. The protein operates within cofactor biosynthesis; molybdopterin biosynthesis. Its function is as follows. Catalyzes the conversion of (8S)-3',8-cyclo-7,8-dihydroguanosine 5'-triphosphate to cyclic pyranopterin monophosphate (cPMP). This chain is Cyclic pyranopterin monophosphate synthase, found in Yersinia pseudotuberculosis serotype IB (strain PB1/+).